We begin with the raw amino-acid sequence, 101 residues long: NAD(P)H-quinone oxidoreductase subunit 4L, chloroplastic (101 aa).

3 helical membrane-spanning segments follow: residues 2–22, 32–52, and 61–81; these read MLEH…YGLI, MCLE…SDLF, and IFSI…PAIV.

It belongs to the complex I subunit 4L family. In terms of assembly, NDH is composed of at least 16 different subunits, 5 of which are encoded in the nucleus.

It is found in the plastid. Its subcellular location is the chloroplast thylakoid membrane. The catalysed reaction is a plastoquinone + NADH + (n+1) H(+)(in) = a plastoquinol + NAD(+) + n H(+)(out). The enzyme catalyses a plastoquinone + NADPH + (n+1) H(+)(in) = a plastoquinol + NADP(+) + n H(+)(out). Functionally, NDH shuttles electrons from NAD(P)H:plastoquinone, via FMN and iron-sulfur (Fe-S) centers, to quinones in the photosynthetic chain and possibly in a chloroplast respiratory chain. The immediate electron acceptor for the enzyme in this species is believed to be plastoquinone. Couples the redox reaction to proton translocation, and thus conserves the redox energy in a proton gradient. This Chloranthus spicatus (Chulantree) protein is NAD(P)H-quinone oxidoreductase subunit 4L, chloroplastic.